Reading from the N-terminus, the 157-residue chain is Myosin essential light chain, striated adductor muscle (157 aa).

EF-hand domains follow at residues 7–44 (DEIDDLKDVFELFDFWDGRDGAVDAFKLGDVCRCLGIN) and 82–117 (GTFADYMEAFKTFDREGQGFISGAELRHVLTALGER).

In molluscan muscle, calcium regulation is associated with myosin rather than with actin. Muscle myosin contains two types of light chains: the catalytic light chain, essential for ATPase activity, and the regulatory light chain, a calcium-binding protein responsible for Ca(2+) dependent binding and Ca(2+) dependent Mg-ATPase activity. This chain is Myosin essential light chain, striated adductor muscle, found in Argopecten irradians (Bay scallop).